Reading from the N-terminus, the 204-residue chain is Thymidylate kinase (204 aa).

12–19 (GVDGAGKS) provides a ligand contact to ATP.

The protein belongs to the thymidylate kinase family.

The catalysed reaction is dTMP + ATP = dTDP + ADP. Its function is as follows. Phosphorylation of dTMP to form dTDP in both de novo and salvage pathways of dTTP synthesis. The sequence is that of Thymidylate kinase from Thiobacillus denitrificans (strain ATCC 25259 / T1).